The following is a 326-amino-acid chain: Autophagy protein 5 (326 aa).

Residue lysine 163 forms a Glycyl lysine isopeptide (Lys-Gly) (interchain with G-Cter in atg12) linkage.

The protein belongs to the ATG5 family. In terms of assembly, conjugated with atg12. Conjugated to atg12; which is essential for autophagy.

The protein localises to the preautophagosomal structure membrane. Involved in cytoplasm to vacuole transport (Cvt) and autophagic vesicle formation. Autophagy is essential for maintenance of amino acid levels and protein synthesis under nitrogen starvation. Required for selective autophagic degradation of the nucleus (nucleophagy). Also required for mitophagy, which eliminates defective or superfluous mitochondria in order to fulfill cellular energy requirements and prevent excess ROS production. Conjugation with atg12, through a ubiquitin-like conjugating system involving atg7 as an E1-like activating enzyme and atg10 as an E2-like conjugating enzyme, is essential for its function. The atg12-atg5 conjugate acts as an E3-like enzyme which is required for lipidation of atg8 and atg8 association to the vesicle membranes. The protein is Autophagy protein 5 (atg5) of Aspergillus fumigatus (strain ATCC MYA-4609 / CBS 101355 / FGSC A1100 / Af293) (Neosartorya fumigata).